We begin with the raw amino-acid sequence, 452 residues long: Adenylosuccinate synthetase isozyme 1 (452 aa).

The tract at residues 1-22 (MSGTRASNDRSSHPGGHKRPRY) is disordered. Residues 37–43 (GDEGKGK) and 65–67 (GHT) each bind GTP. Asp38 serves as the catalytic Proton acceptor. Mg(2+)-binding residues include Asp38 and Gly65. Residue Asp38 coordinates substrate. IMP contacts are provided by residues 38-41 (DEGK), 63-66 (NAGH), Thr158, Arg172, Asn251, Thr266, and Arg330. His66 functions as the Proton donor in the catalytic mechanism. Residue 326–332 (VTTGRKR) coordinates substrate. Residues Arg332, 358–360 (KLD), and 440–443 (GVGK) each bind GTP.

It belongs to the adenylosuccinate synthetase family. Homodimer. It depends on Mg(2+) as a cofactor.

The protein localises to the cytoplasm. It catalyses the reaction IMP + L-aspartate + GTP = N(6)-(1,2-dicarboxyethyl)-AMP + GDP + phosphate + 2 H(+). The protein operates within purine metabolism; AMP biosynthesis via de novo pathway; AMP from IMP: step 1/2. Component of the purine nucleotide cycle (PNC), which interconverts IMP and AMP to regulate the nucleotide levels in various tissues, and which contributes to glycolysis and ammoniagenesis. Catalyzes the first committed step in the biosynthesis of AMP from IMP. The polypeptide is Adenylosuccinate synthetase isozyme 1 (adss1) (Xenopus tropicalis (Western clawed frog)).